We begin with the raw amino-acid sequence, 219 residues long: Zinc finger C2HC domain-containing protein 1B (219 aa).

2 consecutive C2HC/C3H-type zinc fingers follow at residues 14–43 (ELFP…LFNK) and 117–146 (DYIQ…QESR). The Zn(2+) site is built by Cys18, Cys21, His33, Cys37, Cys121, Cys124, His136, and Cys140. The segment at 190–219 (EASAAPTRPAVDPASGAKLRQGFAKSSKKD) is disordered.

The protein belongs to the ZC2HC1 family. The cofactor is Zn(2+).

The polypeptide is Zinc finger C2HC domain-containing protein 1B (ZC2HC1B) (Bos taurus (Bovine)).